Here is a 148-residue protein sequence, read N- to C-terminus: Large ribosomal subunit protein uL15 (148 aa).

Basic and acidic residues predominate over residues 1–10 (MQLHNLEYKK). A disordered region spans residues 1-42 (MQLHNLEYKKGSRNHKEKRVGRGHGSGLGKTSGRGQDGQKAR). Residues 11-22 (GSRNHKEKRVGR) show a composition bias toward basic residues. Gly residues predominate over residues 23-36 (GHGSGLGKTSGRGQ).

It belongs to the universal ribosomal protein uL15 family. As to quaternary structure, part of the 50S ribosomal subunit.

In terms of biological role, binds to the 23S rRNA. The chain is Large ribosomal subunit protein uL15 from Ureaplasma urealyticum serovar 10 (strain ATCC 33699 / Western).